Reading from the N-terminus, the 435-residue chain is Serine--tRNA ligase (435 aa).

Residue 233-235 (TAE) participates in L-serine binding. Residue 264–266 (RAE) participates in ATP binding. E287 is an L-serine binding site. An ATP-binding site is contributed by 351 to 354 (EISS). S386 contributes to the L-serine binding site.

It belongs to the class-II aminoacyl-tRNA synthetase family. Type-1 seryl-tRNA synthetase subfamily. As to quaternary structure, homodimer. The tRNA molecule binds across the dimer.

It localises to the cytoplasm. The catalysed reaction is tRNA(Ser) + L-serine + ATP = L-seryl-tRNA(Ser) + AMP + diphosphate + H(+). It catalyses the reaction tRNA(Sec) + L-serine + ATP = L-seryl-tRNA(Sec) + AMP + diphosphate + H(+). It participates in aminoacyl-tRNA biosynthesis; selenocysteinyl-tRNA(Sec) biosynthesis; L-seryl-tRNA(Sec) from L-serine and tRNA(Sec): step 1/1. Catalyzes the attachment of serine to tRNA(Ser). Is also able to aminoacylate tRNA(Sec) with serine, to form the misacylated tRNA L-seryl-tRNA(Sec), which will be further converted into selenocysteinyl-tRNA(Sec). The protein is Serine--tRNA ligase of Anaeromyxobacter dehalogenans (strain 2CP-C).